The primary structure comprises 155 residues: Small ribosomal subunit protein uS7c (155 aa).

Belongs to the universal ribosomal protein uS7 family. As to quaternary structure, part of the 30S ribosomal subunit.

It localises to the plastid. It is found in the chloroplast. In terms of biological role, one of the primary rRNA binding proteins, it binds directly to 16S rRNA where it nucleates assembly of the head domain of the 30S subunit. This is Small ribosomal subunit protein uS7c (rps7) from Stewartia pseudocamellia (Japanese stewartia).